A 542-amino-acid polypeptide reads, in one-letter code: Excitatory amino acid transporter 1 (542 aa).

The Cytoplasmic segment spans residues 1–47 (MTKSNGEEPKMGGRMERFQQGVRKRTLLAKKKVQNITKEDVKSYLFR). Residues 48–68 (NAFVLLTVTAVIVGTILGFTL) traverse the membrane as a helical segment. At 69–86 (RPYRMSYREVKYFSFPGE) the chain is on the extracellular side. The chain crosses the membrane as a helical span at residues 87–108 (LLMRMLQMLVLPLIISSLVTGM). At 109 to 122 (AALDSKASGKMGMR) the chain is on the cytoplasmic side. Residues 123–145 (AVVYYMTTTIIAVVIGIIIVIII) form a helical membrane-spanning segment. Topologically, residues 146–236 (HPGKGTKENM…ITEELVPVPG (91 aa)) are extracellular. The chain crosses the membrane as a helical span at residues 237–260 (SVNGVNALGLVVFSMCFGFVIGNM). Residues 261 to 269 (KEQGQALRE) are Cytoplasmic-facing. The helical transmembrane segment at 270–297 (FFDSLNEAIMRLVAVIMWYAPVGILFLI) threads the bilayer. Residues 298-318 (AGKIVEMEDMGVIGGQLAMYT) are Extracellular-facing. The chain crosses the membrane as a helical span at residues 319–340 (VTVIVGLLIHAVIVLPLLYFLV). Residues 341 to 345 (TRKNP) lie on the Cytoplasmic side of the membrane. The discontinuously helical intramembrane region spans 346-376 (WVFIGGLLQALITALGTSSSSATLPITFKCL). Residue 363 to 365 (SSS) coordinates L-aspartate. Over 377–385 (EENNGVDKR) the chain is Cytoplasmic. A helical transmembrane segment spans residues 386 to 412 (VTRFVLPVGATINMDGTALYEALAAIF). The Na(+) site is built by glycine 394, threonine 396, and asparagine 398. Threonine 402 lines the L-aspartate pocket. At 413-425 (IAQVNNFELNFGQ) the chain is on the extracellular side. The discontinuously helical intramembrane region spans 426–459 (IITISITATAASIGAAGIPQAGLVTMVIVLTSVG). Residue 443–447 (IPQAG) participates in L-aspartate binding. The Extracellular segment spans residues 460-472 (LPTDDITLIIAVD). The chain crosses the membrane as a helical span at residues 473 to 494 (WFLDRLRTTTNVLGDSLGAGIV). L-aspartate-binding residues include aspartate 476 and asparagine 483. Asparagine 483 and aspartate 487 together coordinate Na(+). The Cytoplasmic portion of the chain corresponds to 495–542 (EHLSRHELKNRDVEMGNSVIEENEMKKPYQLIAQDNETEKPIDSETKM). Position 512 is a phosphoserine (serine 512).

The protein belongs to the dicarboxylate/amino acid:cation symporter (DAACS) (TC 2.A.23) family. SLC1A3 subfamily. As to quaternary structure, homotrimer. Glycosylated. As to expression, detected in brain. Detected at very much lower levels in heart, lung, placenta and skeletal muscle. Highly expressed in cerebellum, but also found in frontal cortex, hippocampus and basal ganglia.

The protein resides in the cell membrane. It carries out the reaction K(+)(in) + L-glutamate(out) + 3 Na(+)(out) + H(+)(out) = K(+)(out) + L-glutamate(in) + 3 Na(+)(in) + H(+)(in). It catalyses the reaction K(+)(in) + L-aspartate(out) + 3 Na(+)(out) + H(+)(out) = K(+)(out) + L-aspartate(in) + 3 Na(+)(in) + H(+)(in). The catalysed reaction is D-aspartate(out) + K(+)(in) + 3 Na(+)(out) + H(+)(out) = D-aspartate(in) + K(+)(out) + 3 Na(+)(in) + H(+)(in). Functionally, sodium-dependent, high-affinity amino acid transporter that mediates the uptake of L-glutamate and also L-aspartate and D-aspartate. Functions as a symporter that transports one amino acid molecule together with two or three Na(+) ions and one proton, in parallel with the counter-transport of one K(+) ion. Mediates Cl(-) flux that is not coupled to amino acid transport; this avoids the accumulation of negative charges due to aspartate and Na(+) symport. Plays a redundant role in the rapid removal of released glutamate from the synaptic cleft, which is essential for terminating the postsynaptic action of glutamate. The protein is Excitatory amino acid transporter 1 of Homo sapiens (Human).